Here is a 197-residue protein sequence, read N- to C-terminus: Ribosomal RNA large subunit methyltransferase E (197 aa).

Residues Gly-50, Trp-52, Asp-70, Asp-88, and Asp-111 each coordinate S-adenosyl-L-methionine. The Proton acceptor role is filled by Lys-151.

This sequence belongs to the class I-like SAM-binding methyltransferase superfamily. RNA methyltransferase RlmE family.

Its subcellular location is the cytoplasm. It carries out the reaction uridine(2552) in 23S rRNA + S-adenosyl-L-methionine = 2'-O-methyluridine(2552) in 23S rRNA + S-adenosyl-L-homocysteine + H(+). Functionally, specifically methylates the uridine in position 2552 of 23S rRNA at the 2'-O position of the ribose in the fully assembled 50S ribosomal subunit. The chain is Ribosomal RNA large subunit methyltransferase E from Syntrophobacter fumaroxidans (strain DSM 10017 / MPOB).